The chain runs to 2647 residues: Filamin-A (2647 aa).

The span at 1 to 15 (MSSSHSRAGQSAAGA) shows a compositional bias: low complexity. The tract at residues 1-39 (MSSSHSRAGQSAAGAAPGGGVDTRDAEMPATEKDLAEDA) is disordered. N-acetylserine is present on serine 2. The segment at 2–274 (SSSHSRAGQS…PKAKLKPGAP (273 aa)) is actin-binding. The residue at position 11 (serine 11) is a Phosphoserine. Positions 22–39 (DTRDAEMPATEKDLAEDA) are enriched in basic and acidic residues. Glycyl lysine isopeptide (Lys-Gly) (interchain with G-Cter in ubiquitin) cross-links involve residues lysine 42, lysine 43, and lysine 135. Calponin-homology (CH) domains are found at residues 43–149 (KIQQ…LHYS) and 166–269 (QTPK…KAKL). The disordered stretch occupies residues 271–294 (PGAPLRPKLNPKKARAYGPGIEPT). 15 Filamin repeats span residues 276–374 (RPKL…EVYV), 376–474 (KSQG…TVTV), 475–570 (GQAC…EVKV), 571–663 (GTEC…MADI), 667–763 (PQDF…RVNV), 764–866 (GAGS…RVKV), 867–965 (EPSH…SVAV), 966–1061 (SPSL…PLEA), 1062–1154 (VAPT…KAHV), 1155–1249 (VPCF…KLQV), 1250–1349 (EPAV…QVPV), 1350–1442 (TEGC…KVPV), 1443–1539 (HDVT…KVKV), 1540–1636 (LPTH…RVRA), and 1649–1740 (VSIG…QVTA). Lysine 299 is covalently cross-linked (Glycyl lysine isopeptide (Lys-Gly) (interchain with G-Cter in SUMO1); alternate). Lysine 299 participates in a covalent cross-link: Glycyl lysine isopeptide (Lys-Gly) (interchain with G-Cter in SUMO2); alternate. Residues lysine 376 and lysine 508 each carry the N6-acetyllysine modification. 5 positions are modified to N6-acetyllysine: lysine 700, lysine 781, lysine 837, lysine 865, and lysine 906. Serine 968 and serine 1055 each carry phosphoserine. At lysine 1071 the chain carries N6-acetyllysine; alternate. Lysine 1071 is modified (N6-succinyllysine; alternate). Phosphoserine occurs at positions 1081 and 1084. Threonine 1089 is modified (phosphothreonine). Phosphoserine is present on residues serine 1301 and serine 1338. The disordered stretch occupies residues 1361 to 1382 (HGPGIQSGTTNKPNKFTVETRG). Lysine 1372 bears the N6-acetyllysine mark. Phosphoserine occurs at positions 1459 and 1533. An interaction with furin region spans residues 1490–1607 (PKGLVEPVDV…DNHDGTYTVA (118 aa)). Lysine 1538 bears the N6-acetyllysine mark. Residues serine 1630 and serine 1734 each carry the phosphoserine modification. A hinge 1 region spans residues 1741–1778 (LAGDQPSVQPPLRSQQLAPQYTYAQGGQQTWAPERPLV). 8 Filamin repeats span residues 1779–1860 (GVNG…QFYV), 1861–1950 (DYVN…PFTA), 1951–2039 (RVTG…PVVI), 2042–2131 (SEIG…SPFS), 2132–2230 (VKVT…QFTV), 2233–2325 (LGEG…VVPV), 2327–2420 (SPSG…KIRV), and 2424–2516 (GHGG…KAKV). Serine 1835 carries the post-translational modification Phosphoserine. Phosphoserine is present on residues serine 1967, serine 2053, serine 2128, serine 2152, serine 2158, serine 2163, serine 2180, serine 2284, serine 2327, and serine 2329. Threonine 2336 carries the phosphothreonine modification. Phosphoserine is present on residues serine 2338, serine 2370, serine 2414, serine 2510, serine 2523, and serine 2526. The segment at 2517 to 2551 (TGPRLVSNHSLHETSSVFVDSLTKATCAPQHGAPG) is hinge 2. Residues 2517–2647 (TGPRLVSNHS…PGSPYRVVVP (131 aa)) are self-association site, tail. One copy of the Filamin 24 repeat lies at 2552–2646 (PGPADASKVV…IPGSPYRVVV (95 aa)). Residue lysine 2569 is modified to N6-acetyllysine; alternate. Lysine 2569 carries the post-translational modification N6-succinyllysine; alternate. Lysine 2575 bears the N6-acetyllysine mark. The residue at position 2599 (threonine 2599) is a Phosphothreonine. N6-acetyllysine is present on residues lysine 2607 and lysine 2621.

The protein belongs to the filamin family. In terms of assembly, homodimer. Interacts with PDLIM2. Interacts with RFLNA and RFLNB. Interacts with FCGR1A, FLNB, FURIN, HSPB7, INPPL1, KCND2, MYOT, MYOZ1, ARHGAP24, PSEN1, PSEN2 and ECSCR. Also interacts with various other binding partners in addition to filamentous actin. Interacts (via N-terminus) with MIS18BP1 (via N-terminus). Interacts (via N-terminus) with TAF1B. Interacts with TMEM67 (via C-terminus) and MKS1. Interacts (via actin-binding domain) with MICALL2 (via CH domain). Interacts (via filamin repeat 5) with SYK; docks SYK to the plasma membrane. Interacts (via filamin repeats 19 and 21) with DRD3; increased PKA-mediated phosphorylation at Ser-2152. Interacts (via filamin repeat 21) with MAS1, AGTR1 and ADRA1D; increases PKA-mediated phosphorylation of FLNA at Ser-2152. Interacts (via filamin repeats 4, 9, 12, 17, 19, 21, and 23) with GP1BA (high affinity), ITGB7, ITGB2 and FBLIM1. Interacts with CEACAM1 (via cytoplasmic domain); inhibits cell migration and cell scattering by interfering with the interaction between FLNA and RALA. Interacts with FOXC1. Interacts (via calponin-homology (CH) domain 1 and filamin repeat 24) with CRMP1; the interaction alters FLNA ternary structure and thus promotes FLNA dissociation from F-actin. Interacts with DPYSL3/CRMP3 and DPYSL4/CRMP4. Interacts with integrin ITGB1 isoform 1/beta-1A and isoform 5/beta-1D. Interacts with LUZP1; the interaction is not necessary for colocalization of LUZP1 with F-actin. Phosphorylation at Ser-2152 is negatively regulated by the autoinhibited conformation of filamin repeats 19-21. Ligand binding induces a conformational switch triggering phosphorylation at Ser-2152 by PKA. In terms of processing, phosphorylation extent changes in response to cell activation. Post-translationally, polyubiquitination in the CH1 domain by a SCF-like complex containing ASB2 leads to proteasomal degradation. Prior dissociation from actin may be required to expose the target lysines. Ubiquitinated in endothelial cells by RNF213 downstream of the non-canonical Wnt signaling pathway, leading to its degradation by the proteasome. Ubiquitous.

The protein resides in the cytoplasm. The protein localises to the cell cortex. It is found in the cytoskeleton. Its subcellular location is the perikaryon. It localises to the cell projection. The protein resides in the growth cone. The protein localises to the podosome. Promotes orthogonal branching of actin filaments and links actin filaments to membrane glycoproteins. Anchors various transmembrane proteins to the actin cytoskeleton and serves as a scaffold for a wide range of cytoplasmic signaling proteins. Interaction with FLNB may allow neuroblast migration from the ventricular zone into the cortical plate. Tethers cell surface-localized furin, modulates its rate of internalization and directs its intracellular trafficking. Involved in ciliogenesis. Plays a role in cell-cell contacts and adherens junctions during the development of blood vessels, heart and brain organs. Plays a role in platelets morphology through interaction with SYK that regulates ITAM- and ITAM-like-containing receptor signaling, resulting in by platelet cytoskeleton organization maintenance. During the axon guidance process, required for growth cone collapse induced by SEMA3A-mediated stimulation of neurons. This chain is Filamin-A (FLNA), found in Homo sapiens (Human).